Consider the following 170-residue polypeptide: Lipoprotein signal peptidase (170 aa).

3 helical membrane-spanning segments follow: residues 12 to 32 (WYWV…WVLS), 67 to 87 (WQRW…SVWL), and 94 to 116 (MWRL…IDRL). Catalysis depends on residues D123 and D141. Residues 133 to 153 (HFPAFNIADSAICVGAALIIL) traverse the membrane as a helical segment.

The protein belongs to the peptidase A8 family.

Its subcellular location is the cell inner membrane. It catalyses the reaction Release of signal peptides from bacterial membrane prolipoproteins. Hydrolyzes -Xaa-Yaa-Zaa-|-(S,diacylglyceryl)Cys-, in which Xaa is hydrophobic (preferably Leu), and Yaa (Ala or Ser) and Zaa (Gly or Ala) have small, neutral side chains.. It participates in protein modification; lipoprotein biosynthesis (signal peptide cleavage). Functionally, this protein specifically catalyzes the removal of signal peptides from prolipoproteins. The protein is Lipoprotein signal peptidase of Shewanella halifaxensis (strain HAW-EB4).